Consider the following 267-residue polypeptide: Membrane-spanning 4-domains subfamily A member 12 (267 aa).

The Cytoplasmic portion of the chain corresponds to 1–91 (MMSSKPTSHA…MNFKEEAKAL (91 aa)). A helical membrane pass occupies residues 92–112 (GVIQIMVGLMHIGFGIVLCLI). Residues 113–120 (SFSFREVL) lie on the Extracellular side of the membrane. The helical transmembrane segment at 121-141 (GFASTAVIGGYPFWGGLSFII) threads the bilayer. Topologically, residues 142–160 (SGSLSVSASKELSRCLVKG) are cytoplasmic. The chain crosses the membrane as a helical span at residues 161 to 181 (SLGMNIVSSILAFIGVILLLV). Residues 182–200 (DMCINGVAGQDYWAVLSGK) lie on the Extracellular side of the membrane. A helical membrane pass occupies residues 201–221 (GISATLMIFSLLEFFVACATA). The Cytoplasmic portion of the chain corresponds to 222–267 (HFANQANTTTNMSVLVIPNMYESNPVTPASSSAPPRCNNYSANAPK). Residues 248 to 267 (TPASSSAPPRCNNYSANAPK) form a disordered region.

It belongs to the MS4A family.

Its subcellular location is the membrane. Functionally, may be involved in signal transduction as a component of a multimeric receptor complex. This Homo sapiens (Human) protein is Membrane-spanning 4-domains subfamily A member 12 (MS4A12).